The primary structure comprises 106 residues: UPF0145 protein PputGB1_2909 (106 aa).

This sequence belongs to the UPF0145 family.

The sequence is that of UPF0145 protein PputGB1_2909 from Pseudomonas putida (strain GB-1).